The chain runs to 375 residues: Meiotic driver cw27 (375 aa).

Disordered regions lie at residues 1–42 and 74–103; these read MKNK…STLP and DYDE…GTTD. The span at 11–29 shows a compositional bias: basic and acidic residues; that stretch reads SMDELSTKNDNEIDLEKGP. The next 7 membrane-spanning stretches (helical) occupy residues 108–128, 145–165, 172–192, 208–228, 245–265, 272–292, and 336–356; these read FLIK…PAVC, WTLI…SWCF, AVKV…ISLA, EMMI…FGCV, TISA…WTLW, LQVL…MSLF, and VIGF…NAIG.

Belongs to the WTF family. Homomer. Forms protein aggregates. The two isoforms can interact with each other and with themselves. High sequence similarity is required for their interaction.

It is found in the spore membrane. The protein localises to the vacuole. Its subcellular location is the membrane. It localises to the ascus epiplasm. The protein resides in the cytoplasm. It is found in the endoplasmic reticulum. Its function is as follows. Promotes unequal transmission of alleles from the parental zygote to progeny spores by acting as poison/antidote system where the poison and antidote proteins are produced from the same locus; the poison component is trans-acting and targets all spores within an ascus whereas the antidote component is spore-specific, leading to poisoning of all progeny that do not inherit the allele. In terms of biological role, localizes isoform 2 to the vacuole thereby facilitating its degradation. Functionally, forms toxic aggregates that disrupt spore maturation. This chain is Meiotic driver cw27, found in Schizosaccharomyces pombe (Fission yeast).